A 757-amino-acid polypeptide reads, in one-letter code: Mitofusin-2 (757 aa).

Topologically, residues 1–604 are cytoplasmic; sequence MSLLFSRCNS…TQEEFMVSMV (604 aa). Residues 30 to 94 form a part of a helix bundle domain, formed by helices from N-terminal and C-terminal regions region; sequence KHFVTAKKKI…VRGISEVLAR (65 aa). One can recognise a Dynamin-type G domain in the interval 93–342; sequence ARRHMKVAFF…VRMFEFQNFE (250 aa). A G1 motif region spans residues 103–110; that stretch reads GRTSNGKS. Position 106 to 111 (106 to 111) interacts with GTP; sequence SNGKST. A Phosphothreonine; by PINK1 modification is found at threonine 111. The interval 129–130 is G2 motif; that stretch reads TT. The segment at 199–202 is G3 motif; it reads DSPG. 258-261 is a GTP binding site; it reads NRWD. A G4 motif region spans residues 258 to 261; that stretch reads NRWD. Residue glutamate 288 is a region of interest, G5 motif. The GTP site is built by serine 305 and lysine 307. Residues 359-385 are part of a helix bundle domain, formed by helices from N-terminal and C-terminal regions; sequence EQHTVRAKQIAEAVRLIMDSLHMAARE. The stretch at 391–434 forms a coiled coil; that stretch reads EEMREERQDRLKFIDKQLELLAQDYKLRIKQITEEVERQVSTAM. Serine 442 carries the post-translational modification Phosphoserine; by PINK1. The helical transmembrane segment at 605-625 threads the bilayer; it reads TGLASLTSRTSMGILVVGGVV. Position 626 (tryptophan 626) is a topological domain, mitochondrial intermembrane. A helical membrane pass occupies residues 627 to 647; it reads KAVGWRLIALSFGLYGLLYVY. Topologically, residues 648–757 are cytoplasmic; it reads ERLTWTTKAK…FTHQYLQPSR (110 aa). Residues 695–738 are a coiled coil; that stretch reads TFAHLCQQVDVTRENLEQEIAAMNKKIEVLDSLQSKAKLLRNKA. The segment at 722-753 is part of a helix bundle domain, formed by helices from N-terminal and C-terminal regions; the sequence is EVLDSLQSKAKLLRNKAGWLDSELNMFTHQYL.

The protein belongs to the TRAFAC class dynamin-like GTPase superfamily. Dynamin/Fzo/YdjA family. Mitofusin subfamily. As to quaternary structure, forms homomultimers and heteromultimers with MFN1. Oligomerization is essential for mitochondrion fusion. Interacts with VAT1. Interacts with STOML2; may form heterooligomers. Interacts (phosphorylated) with PRKN. Interacts with EIF2AK3. Interacts with THG1L; THG1L probably functions as a guanyl-nucleotide exchange factor/GEF, activating MFN2. In terms of processing, phosphorylated by PINK1. Ubiquitinated by non-degradative ubiquitin by PRKN, promoting mitochondrial fusion; deubiquitination by USP30 inhibits mitochondrial fusion. Ubiquitinated by HUWE1 when dietary stearate (C18:0) levels are low; ubiquitination inhibits mitochondrial fusion. Ubiquitous; expressed at low level. Highly expressed in heart and kidney.

The protein localises to the mitochondrion outer membrane. The catalysed reaction is GTP + H2O = GDP + phosphate + H(+). Mitochondrial outer membrane GTPase that mediates mitochondrial clustering and fusion. Mitochondria are highly dynamic organelles, and their morphology is determined by the equilibrium between mitochondrial fusion and fission events. Overexpression induces the formation of mitochondrial networks. Membrane clustering requires GTPase activity and may involve a major rearrangement of the coiled coil domains. Plays a central role in mitochondrial metabolism and may be associated with obesity and/or apoptosis processes. Plays an important role in the regulation of vascular smooth muscle cell proliferation. Involved in the clearance of damaged mitochondria via selective autophagy (mitophagy). Is required for PRKN recruitment to dysfunctional mitochondria. Involved in the control of unfolded protein response (UPR) upon ER stress including activation of apoptosis and autophagy during ER stress. Acts as an upstream regulator of EIF2AK3 and suppresses EIF2AK3 activation under basal conditions. The protein is Mitofusin-2 of Homo sapiens (Human).